A 409-amino-acid polypeptide reads, in one-letter code: Pentatricopeptide repeat-containing protein At1g01970 (409 aa).

PPR repeat units follow at residues 164–198, 199–233, 234–268, 269–303, 304–338, and 339–373; these read NARDYTKIIHYYGKLNQVEDAERTLLSMKNRGFLI, DQVTLTAMVQLYSKAGCHKLAEETFNEIKLLGEPL, DYRSYGSMIMAYIRAGVPEKGESLLREMDSQEICA, GREVYKALLRDYSMGGDAEGAKRVFDAVQIAGITP, DVKLCGLLINAYSVSGQSQNARLAFENMRKAGIKA, and TDKCVALVLAAYEKEEKLNEALGFLVELEKDSIML.

This sequence belongs to the PPR family. P subfamily.

The sequence is that of Pentatricopeptide repeat-containing protein At1g01970 from Arabidopsis thaliana (Mouse-ear cress).